We begin with the raw amino-acid sequence, 240 residues long: Proline-rich antigen homolog (240 aa).

Composition is skewed to pro residues over residues M1 to P31 and A38 to P78. The tract at residues M1 to P78 is disordered. One can recognise an RDD domain in the interval T89–M233. 3 helical membrane passes run A98–V118, S142–W162, and L203–A223.

The protein belongs to the mycobacterial Pra family.

The protein resides in the cell membrane. The protein is Proline-rich antigen homolog of Mycobacterium tuberculosis (strain CDC 1551 / Oshkosh).